The sequence spans 380 residues: Dynactin subunit 2 (380 aa).

A disordered region spans residues 1-40 (MADPKFQNLPGIAYDQPDVYETPDDPETDTSDYYEEEPEN). Acidic residues predominate over residues 21-40 (ETPDDPETDTSDYYEEEPEN). Coiled-coil stretches lie at residues 100 to 135 (VQKCQRLQIEMNELLNEVAALQVDRKIADEEKQSYD) and 353 to 377 (ETFAQNLETITNKVAKVEQRVTAIS).

Belongs to the dynactin subunit 2 family. Subunit of dynactin, a multiprotein complex associated with dynein.

The protein localises to the cytoplasm. The protein resides in the cytoskeleton. It is found in the membrane. In terms of biological role, modulates cytoplasmic dynein binding to an organelle, and plays a role in prometaphase chromosome alignment and spindle organization during mitosis. May play a role in synapse formation during brain development. This is Dynactin subunit 2 from Drosophila pseudoobscura pseudoobscura (Fruit fly).